A 349-amino-acid chain; its full sequence is D-alanine--D-alanine ligase (349 aa).

Residues 132 to 335 (KHVFEAVGVP…YSDLIEKLVD (204 aa)) form the ATP-grasp domain. An ATP-binding site is contributed by 162–217 (VEKLEFPVFVKPANMGSSVGISKVDDLADLQPALSEAYKYDNRVVIEQGVDAREIE). 3 residues coordinate Mg(2+): aspartate 289, glutamate 302, and asparagine 304.

It belongs to the D-alanine--D-alanine ligase family. Mg(2+) serves as cofactor. Mn(2+) is required as a cofactor.

The protein resides in the cytoplasm. The enzyme catalyses 2 D-alanine + ATP = D-alanyl-D-alanine + ADP + phosphate + H(+). It participates in cell wall biogenesis; peptidoglycan biosynthesis. Cell wall formation. This is D-alanine--D-alanine ligase from Lactococcus lactis subsp. cremoris (strain SK11).